The primary structure comprises 103 residues: A-type ATP synthase subunit F (103 aa).

Belongs to the V-ATPase F subunit family. As to quaternary structure, has multiple subunits with at least A(3), B(3), C, D, E, F, H, I and proteolipid K(x).

It localises to the cell membrane. Its function is as follows. Component of the A-type ATP synthase that produces ATP from ADP in the presence of a proton gradient across the membrane. The polypeptide is A-type ATP synthase subunit F (Pyrococcus abyssi (strain GE5 / Orsay)).